The following is a 219-amino-acid chain: Guanylate kinase (219 aa).

In terms of domain architecture, Guanylate kinase-like spans 15 to 194; it reads GLMFVLSSPS…AFAEVQSILK (180 aa). 22-29 is an ATP binding site; that stretch reads SPSGAGKT.

This sequence belongs to the guanylate kinase family.

It localises to the cytoplasm. The enzyme catalyses GMP + ATP = GDP + ADP. Its function is as follows. Essential for recycling GMP and indirectly, cGMP. The chain is Guanylate kinase from Nitrobacter hamburgensis (strain DSM 10229 / NCIMB 13809 / X14).